The chain runs to 259 residues: Type-2Aa cytolytic delta-endotoxin (259 aa).

The protein belongs to the cyt1/cyt2 endotoxin family. Homodimer (protoxin) and monomer (active toxin). Post-translationally, active after proteolytic processing.

Kills the larvae of dipteran insects by making pores in the epithelial cell membrane of the insect midgut. This is Type-2Aa cytolytic delta-endotoxin (cyt2Aa1) from Bacillus thuringiensis subsp. kyushuensis.